The chain runs to 252 residues: Small ribosomal subunit protein uS2A (252 aa).

Ser2 is subject to N-acetylserine. The segment at 209–252 (EVEQQVAEEATTEEAGEEEAKEEVTEEQAEATEWAEENADNVEW) is disordered. Acidic residues predominate over residues 218–252 (ATTEEAGEEEAKEEVTEEQAEATEWAEENADNVEW).

It belongs to the universal ribosomal protein uS2 family. Component of the small ribosomal subunit. Mature ribosomes consist of a small (40S) and a large (60S) subunit. The 40S subunit contains about 33 different proteins and 1 molecule of RNA (18S). The 60S subunit contains about 49 different proteins and 3 molecules of RNA (25S, 5.8S and 5S). Interacts with RPS21.

It is found in the cytoplasm. In terms of biological role, required for the assembly and/or stability of the 40S ribosomal subunit. Required for the processing of the 20S rRNA-precursor to mature 18S rRNA in a late step of the maturation of 40S ribosomal subunits. This is Small ribosomal subunit protein uS2A from Saccharomyces cerevisiae (strain RM11-1a) (Baker's yeast).